A 516-amino-acid chain; its full sequence is uncharacterized protein (516 aa).

A disordered region spans residues M1–E35. The segment covering D16–Y28 has biased composition (basic and acidic residues). A Phosphoserine modification is found at S31. 12 helical membrane passes run V77–A97, V111–A131, M143–I163, V166–G186, G198–V218, W231–H251, L301–I321, S345–F365, L386–T406, I412–F432, I439–F461, and A481–L501.

The protein belongs to the major facilitator superfamily.

It is found in the membrane. This is an uncharacterized protein from Schizosaccharomyces pombe (strain 972 / ATCC 24843) (Fission yeast).